We begin with the raw amino-acid sequence, 173 residues long: Cytochrome b6-f complex subunit 4, chloroplastic (173 aa).

The N-terminal 14 residues, 1–14, are a transit peptide targeting the chloroplast; sequence ESALERRSSSVVMN. A run of 3 helical transmembrane segments spans residues 49 to 69, 108 to 128, and 144 to 164; these read LLYM…GLAV, LLGV…PFIE, and SVFL…TLPI.

Belongs to the cytochrome b family. PetD subfamily. The 4 large subunits of the cytochrome b6-f complex are cytochrome b6, subunit IV (17 kDa polypeptide, petD), cytochrome f and the Rieske protein, while the 4 small subunits are petG, petL, petM and petN. The complex functions as a dimer.

Its subcellular location is the plastid. The protein localises to the chloroplast thylakoid membrane. In terms of biological role, component of the cytochrome b6-f complex, which mediates electron transfer between photosystem II (PSII) and photosystem I (PSI), cyclic electron flow around PSI, and state transitions. The chain is Cytochrome b6-f complex subunit 4, chloroplastic from Euglena gracilis.